We begin with the raw amino-acid sequence, 147 residues long: DNA-directed RNA polymerase I subunit rpa14 (147 aa).

Residues 71 to 147 (VQGPPTEELI…TQGVGEKEQS (77 aa)) form a disordered region. Residues 74–84 (PPTEELIIPPE) show a composition bias toward low complexity. The segment covering 87–111 (LETKEEESLKHAREENDDLHLDKET) has biased composition (basic and acidic residues). Positions 112–124 (KKRLKKEKKKAAR) are enriched in basic residues. Basic and acidic residues predominate over residues 125-135 (REKEEARKAKA).

In terms of assembly, component of the RNA polymerase I (Pol I) complex consisting of 14 subunits. Part of a Pol I subcomplex consisting of the subunits A14 and A43. Interacts with rpa43. In terms of processing, phosphorylated.

The protein resides in the nucleus. It is found in the nucleolus. Functionally, DNA-dependent RNA polymerase catalyzes the transcription of DNA into RNA using the four ribonucleoside triphosphates as substrates. Component of RNA polymerase I which synthesizes ribosomal RNA precursors. A14 seems to play a role in the stability of Pol I subunit A43 and association of rrn3 to Pol I. This is DNA-directed RNA polymerase I subunit rpa14 (ker1) from Schizosaccharomyces pombe (strain 972 / ATCC 24843) (Fission yeast).